A 277-amino-acid polypeptide reads, in one-letter code: Undecaprenyl-diphosphatase (277 aa).

6 consecutive transmembrane segments (helical) span residues 47-67 (FNII…RGKI), 85-105 (VNLL…ADLI), 108-128 (WLFN…IMLW), 183-203 (AATE…AVYS), 218-238 (VFAV…RALL), and 249-269 (FAWY…FHLI).

The protein belongs to the UppP family.

The protein localises to the cell inner membrane. It catalyses the reaction di-trans,octa-cis-undecaprenyl diphosphate + H2O = di-trans,octa-cis-undecaprenyl phosphate + phosphate + H(+). Functionally, catalyzes the dephosphorylation of undecaprenyl diphosphate (UPP). Confers resistance to bacitracin. The sequence is that of Undecaprenyl-diphosphatase from Pseudomonas paraeruginosa (strain DSM 24068 / PA7) (Pseudomonas aeruginosa (strain PA7)).